Here is a 268-residue protein sequence, read N- to C-terminus: Ubiquinone biosynthesis protein COQ4 homolog, mitochondrial (268 aa).

Residues histidine 171, aspartate 172, histidine 175, and glutamate 187 each contribute to the Zn(2+) site.

It belongs to the COQ4 family. Component of a multi-subunit COQ enzyme complex. Requires Zn(2+) as cofactor.

The protein localises to the mitochondrion inner membrane. The catalysed reaction is a 4-hydroxy-3-methoxy-5-(all-trans-polyprenyl)benzoate + H(+) = a 2-methoxy-6-(all-trans-polyprenyl)phenol + CO2. Its pathway is cofactor biosynthesis; ubiquinone biosynthesis. Its function is as follows. Lyase that catalyzes the C1-decarboxylation of 4-hydroxy-3-methoxy-5-(all-trans-polyprenyl)benzoic acid into 2-methoxy-6-(all-trans-polyprenyl)phenol during ubiquinone biosynthesis. This Drosophila erecta (Fruit fly) protein is Ubiquinone biosynthesis protein COQ4 homolog, mitochondrial.